The chain runs to 409 residues: Argininosuccinate synthase (409 aa).

Residues 12–20 and A39 contribute to the ATP site; that span reads AYSGGLDTS. The L-citrulline site is built by Y90 and S95. Residue G120 coordinates ATP. L-aspartate is bound by residues T122, N126, and D127. Residue N126 participates in L-citrulline binding. The L-citrulline site is built by R130, S181, S190, E266, and Y278.

It belongs to the argininosuccinate synthase family. Type 1 subfamily. In terms of assembly, homotetramer.

It is found in the cytoplasm. The enzyme catalyses L-citrulline + L-aspartate + ATP = 2-(N(omega)-L-arginino)succinate + AMP + diphosphate + H(+). It participates in amino-acid biosynthesis; L-arginine biosynthesis; L-arginine from L-ornithine and carbamoyl phosphate: step 2/3. This is Argininosuccinate synthase from Gluconacetobacter diazotrophicus (strain ATCC 49037 / DSM 5601 / CCUG 37298 / CIP 103539 / LMG 7603 / PAl5).